The chain runs to 463 residues: MEKPSREAFEGNNKLLIGIVLSVITFWLFAQSLVNVVPILEDSFNTDIGTVNIAVSITALFSGMFVVGAGGLADKYGRIKLTNIGIILNILGSLLIIISNIPLLLIIGRLIQGLSAACIMPATLSIIKSYYIGKDRQRALSYWSIGSWGGSGVCSFFGGAVATLLGWRWIFILSIIISLIALFLIKGTPETKSKSISLNKFDIKGLVLLVIMLLSLNILITKGSELGVSSLLFITLLAITIGSFSLFIVLEKRATNPLIDFKLFKNKAYTGATASNFLLNGVAGTLIVANTFVQRGLGYSSLQAGSLSITYLVMVLIMIRVGEKLLQTLGCKKPMLIGTGVLIVGECLISLTFLPEILYVICCIIGYLFFGLGLGIYATPSTDTAIANAPLEKVGVAAGIYKMASALGGAFGVALSGAVYAIVSNMTNIYTGAMIALWLNAGMGILSFVIILLLVPKQNDTQL.

14 helical membrane-spanning segments follow: residues 17-37 (IGIV…VNVV), 53-73 (IAVS…GGLA), 86-106 (IILN…LLLI), 107-127 (IGRL…LSII), 142-162 (YWSI…GAVA), 165-185 (LGWR…LFLI), 201-221 (FDIK…ILIT), 230-250 (SLLF…FIVL), 273-293 (TASN…NTFV), 299-319 (YSSL…LIMI), 334-354 (PMLI…LTFL), 357-377 (ILYV…LGIY), 403-423 (MASA…YAIV), and 435-455 (IALW…LLLV).

It belongs to the major facilitator superfamily. TCR/Tet family.

The protein localises to the cell membrane. Multidrug efflux pump that acts independently of NorA and is one of the factors that confers resistance against diverse quinolones and chemical compounds. In Staphylococcus aureus (strain MSSA476), this protein is Quinolone resistance protein NorB (norB).